The following is a 597-amino-acid chain: Fructan 1-exohydrolase w1 (597 aa).

Residues 1-20 (MAQAWAFLLPVLVFGSYVTS) form the signal peptide. Asp76 is an active-site residue. 3 N-linked (GlcNAc...) asparagine glycosylation sites follow: Asn169, Asn237, and Asn249. Cys447 and Cys493 are joined by a disulfide. Asn568 is a glycosylation site (N-linked (GlcNAc...) asparagine).

The protein belongs to the glycosyl hydrolase 32 family.

The enzyme catalyses Hydrolysis of terminal, non-reducing (2-&gt;1)-linked beta-D-fructofuranose residues in fructans.. Inhibited by sucrose. Hydrolyzes inulin-type beta-(2,1)-fructans and beta-(2,1)-linkages in branched fructans. Has low activity against beta-(2,6)-linked fructans. May play a role as a beta-(2,1)-trimmer during graminan biosynthesis. The chain is Fructan 1-exohydrolase w1 from Triticum aestivum (Wheat).